Reading from the N-terminus, the 138-residue chain is Mini-ribonuclease 3 (138 aa).

Residue Asp-33 is part of the active site.

Belongs to the MrnC RNase family. As to quaternary structure, homodimer. Mg(2+) is required as a cofactor.

The protein resides in the cytoplasm. Its function is as follows. Involved in correct processing of both the 5' and 3' ends of 23S rRNA precursor. Processes 30S rRNA precursor transcript even in absence of ribonuclease 3 (Rnc); Rnc processes 30S rRNA into smaller rRNA precursors. The sequence is that of Mini-ribonuclease 3 from Synechococcus sp. (strain ATCC 27144 / PCC 6301 / SAUG 1402/1) (Anacystis nidulans).